A 146-amino-acid chain; its full sequence is D-aminoacyl-tRNA deacylase (146 aa).

A Gly-cisPro motif, important for rejection of L-amino acids motif is present at residues 137 to 138 (GP).

This sequence belongs to the DTD family. In terms of assembly, homodimer.

It localises to the cytoplasm. The enzyme catalyses glycyl-tRNA(Ala) + H2O = tRNA(Ala) + glycine + H(+). It catalyses the reaction a D-aminoacyl-tRNA + H2O = a tRNA + a D-alpha-amino acid + H(+). Its function is as follows. An aminoacyl-tRNA editing enzyme that deacylates mischarged D-aminoacyl-tRNAs. Also deacylates mischarged glycyl-tRNA(Ala), protecting cells against glycine mischarging by AlaRS. Acts via tRNA-based rather than protein-based catalysis; rejects L-amino acids rather than detecting D-amino acids in the active site. By recycling D-aminoacyl-tRNA to D-amino acids and free tRNA molecules, this enzyme counteracts the toxicity associated with the formation of D-aminoacyl-tRNA entities in vivo and helps enforce protein L-homochirality. This Desulfatibacillum aliphaticivorans protein is D-aminoacyl-tRNA deacylase.